A 542-amino-acid polypeptide reads, in one-letter code: Leucine-rich repeat-containing protein 56 (542 aa).

LRR repeat units follow at residues 94-115 (NLDQLKLNGSHLGSLRDLGTSL), 117-138 (HLQVLWLARCGLADLDGIASLP), 139-160 (ALKELYASYNNISDLSPLCLLE), 161-182 (QLEVLDLEGNSVEDLGQVRYLQ), and 186-206 (RLAMLTLEGNLVCLQPAPGPT). The region spanning 207–250 (NKVPRGYNYRAEVRKLIPQLQVLDEVPAAHTGPPAPPRLSQDWL) is the LRRCT domain. Disordered regions lie at residues 308–377 (LLSE…ADSS), 396–475 (LPYR…LQSR), and 507–542 (RLSPRAQGCPGPKPAPDAAARPPRAAELSHPSPVPT). The span at 416 to 426 (RVPEEQVHQAE) shows a compositional bias: basic and acidic residues. Low complexity predominate over residues 522–532 (PDAAARPPRAA).

This sequence belongs to the LRRC56 family. Interacts with IFT88.

The protein localises to the cell projection. Its subcellular location is the cilium. Required for the assembly of dynein arms. The chain is Leucine-rich repeat-containing protein 56 (LRRC56) from Homo sapiens (Human).